We begin with the raw amino-acid sequence, 398 residues long: Acetate kinase 1 (398 aa).

Position 9 (N9) interacts with Mg(2+). Residue K16 coordinates ATP. R89 contributes to the substrate binding site. D146 acts as the Proton donor/acceptor in catalysis. ATP contacts are provided by residues 206–210 (HLGNG), 281–283 (DCR), and 329–333 (GIGEN). E384 is a binding site for Mg(2+).

Belongs to the acetokinase family. In terms of assembly, homodimer. Mg(2+) is required as a cofactor. Requires Mn(2+) as cofactor.

Its subcellular location is the cytoplasm. The catalysed reaction is acetate + ATP = acetyl phosphate + ADP. The protein operates within metabolic intermediate biosynthesis; acetyl-CoA biosynthesis; acetyl-CoA from acetate: step 1/2. In terms of biological role, catalyzes the formation of acetyl phosphate from acetate and ATP. Can also catalyze the reverse reaction. This chain is Acetate kinase 1, found in Aliivibrio fischeri (strain ATCC 700601 / ES114) (Vibrio fischeri).